A 592-amino-acid chain; its full sequence is Protein US23 (592 aa).

Positions 407–491 (PRSLGDGEEE…NNVVPNVDRR (85 aa)) are disordered. The segment covering 460-481 (ADDEEQGEDDDDSGAEPMEPEE) has biased composition (acidic residues).

The protein belongs to the herpesviridae US22 family.

Its subcellular location is the virion tegument. The protein is Protein US23 (US23) of Homo sapiens (Human).